The chain runs to 764 residues: Molybdenum cofactor sulfurase 1 (764 aa).

At Lys-228 the chain carries N6-(pyridoxal phosphate)lysine. Cys-394 is an active-site residue. Residues 607 to 762 (LRLLKQSDEE…LYCNSVVEGL (156 aa)) enclose the MOSC domain.

It belongs to the class-V pyridoxal-phosphate-dependent aminotransferase family. MOCOS subfamily. Requires pyridoxal 5'-phosphate as cofactor.

The catalysed reaction is Mo-molybdopterin + L-cysteine + AH2 = thio-Mo-molybdopterin + L-alanine + A + H2O. Functionally, sulfurates the molybdenum cofactor. Sulfation of molybdenum is essential for xanthine dehydrogenase (XDH) and aldehyde oxidase (ADO) enzymes in which molybdenum cofactor is liganded by 1 oxygen and 1 sulfur atom in active form. The chain is Molybdenum cofactor sulfurase 1 from Aedes aegypti (Yellowfever mosquito).